The sequence spans 588 residues: Schlafen family member 12-like (588 aa).

A helical membrane pass occupies residues 566 to 586 (IFLFVCLFRFCLFVCWFVCFF).

The protein belongs to the Schlafen family.

It is found in the membrane. The protein is Schlafen family member 12-like (SLFN12L) of Homo sapiens (Human).